A 569-amino-acid polypeptide reads, in one-letter code: Phosphatase and actin regulator 2 (569 aa).

Positions 1 to 13 are enriched in polar residues; that stretch reads MGQTSVSALSPQP. A disordered region spans residues 1–47; the sequence is MGQTSVSALSPQPGSVDGLDKASIANSDGPPAGSQTPPFKRKGKLST. S27 is modified (phosphoserine). The residue at position 36 (T36) is a Phosphothreonine. One copy of the RPEL 1 repeat lies at 71 to 96; sequence AVLERKISTRQSREELIRRGLLKELP. Disordered stretches follow at residues 98-253 and 295-483; these read QDGD…TGKP and PTLP…QEAK. Residues 140-151 are compositionally biased toward basic and acidic residues; it reads GPPREEQAEEKT. A compositionally biased stretch (low complexity) spans 162–176; sequence GSKASSSPSASSTSS. The span at 212–224 shows a compositional bias: polar residues; the sequence is LSPNTVTSETSSL. The residue at position 357 (S357) is a Phosphoserine. Positions 386–399 are enriched in acidic residues; it reads TDDDDEEDDDDDST. RPEL repeat units lie at residues 412–437, 450–475, and 488–513; these read DTLAIKLGNRPSKKELEDKNILQRTS, TKLVRRLSQRPTTEELEQRSILKQKN, and RRLSRKLSLRPTVPELQARRILRFNE. The span at 423–444 shows a compositional bias: basic and acidic residues; the sequence is SKKELEDKNILQRTSEEERQEL. Residue S457 is modified to Phosphoserine. Basic and acidic residues predominate over residues 461–483; the sequence is TTEELEQRSILKQKNEEEEQEAK. At S495 the chain carries Phosphoserine.

Belongs to the phosphatase and actin regulator family. In terms of assembly, binds PPP1CA and actin. Expressed in the brain with high levels in the cerebellum, specifically in the Purkinje cell layer, choroid plexus and thalamus (ventral, rhomboid and anterior nuclei). Moderate to high expression in the hippocampus, piriform cortex, olfactory bulb, entorhinal cortex, as well as in geniculate bodies, lamboid septal zone, preoptic area and ventral pallidum (at protein level).

The sequence is that of Phosphatase and actin regulator 2 (Phactr2) from Rattus norvegicus (Rat).